The sequence spans 428 residues: Adenylosuccinate synthetase (428 aa).

GTP contacts are provided by residues 11–17 (GDEGKGK) and 39–41 (GHT). Asp-12 (proton acceptor) is an active-site residue. Asp-12 and Gly-39 together coordinate Mg(2+). IMP-binding positions include 12-15 (DEGK), 37-40 (NAGH), Thr-130, Arg-144, Asn-226, Thr-241, and Arg-305. Catalysis depends on His-40, which acts as the Proton donor. 301-307 (VTTGRKR) is a substrate binding site. GTP-binding positions include Arg-307, 333–335 (KLD), and 415–417 (GTG).

The protein belongs to the adenylosuccinate synthetase family. As to quaternary structure, homodimer. Mg(2+) serves as cofactor.

The protein localises to the cytoplasm. It carries out the reaction IMP + L-aspartate + GTP = N(6)-(1,2-dicarboxyethyl)-AMP + GDP + phosphate + 2 H(+). Its pathway is purine metabolism; AMP biosynthesis via de novo pathway; AMP from IMP: step 1/2. Plays an important role in the de novo pathway and in the salvage pathway of purine nucleotide biosynthesis. Catalyzes the first committed step in the biosynthesis of AMP from IMP. This chain is Adenylosuccinate synthetase, found in Lodderomyces elongisporus (strain ATCC 11503 / CBS 2605 / JCM 1781 / NBRC 1676 / NRRL YB-4239) (Yeast).